The chain runs to 699 residues: Transketolase (699 aa).

Substrate is bound at residue H45. Thiamine diphosphate-binding positions include T48, H85, and 133–135; that span reads GPL. D177 contributes to the Mg(2+) binding site. Thiamine diphosphate-binding residues include G178 and N207. Residues N207 and I209 each contribute to the Mg(2+) site. Positions 283, 378, and 405 each coordinate substrate. H283 is a thiamine diphosphate binding site. The Proton donor role is filled by E441. Position 467 (F467) interacts with thiamine diphosphate. The substrate site is built by H491, D499, and R552.

The protein belongs to the transketolase family. As to quaternary structure, homodimer. Mg(2+) serves as cofactor. It depends on Ca(2+) as a cofactor. Mn(2+) is required as a cofactor. The cofactor is Co(2+). Requires thiamine diphosphate as cofactor.

It carries out the reaction D-sedoheptulose 7-phosphate + D-glyceraldehyde 3-phosphate = aldehydo-D-ribose 5-phosphate + D-xylulose 5-phosphate. Catalyzes the transfer of a two-carbon ketol group from a ketose donor to an aldose acceptor, via a covalent intermediate with the cofactor thiamine pyrophosphate. In Mycobacterium leprae (strain TN), this protein is Transketolase (tkt).